The chain runs to 201 residues: MAEAAALEGSEPVDLTKHPSGIIPTLQNIVSTVNLDCKLDLKAIALQARNAEYNPKRFAAVIMRIREPKTTALIFASGKMVCTGAKSEQQSKLAARKYARIIQKLGFPAKFKDFKIQNIVASCDVKFPIRLEGLAYSHGAFSSYEPELFPGLIYRMRQPKIVLLIFVSGKIVLTGAKVREETYSAFENIYPVLTEFRKVQQ.

A run of 2 repeats spans residues 26-102 and 116-193.

The protein belongs to the TBP family. In terms of assembly, belongs to the TFIID complex together with the TBP-associated factors (TAFs). Binds DNA as monomer.

It is found in the nucleus. Its function is as follows. General transcription factor that functions at the core of the DNA-binding multiprotein factor TFIID. Binding of TFIID to the TATA box is the initial transcriptional step of the pre-initiation complex (PIC), playing a role in the activation of eukaryotic genes transcribed by RNA polymerase II. The sequence is that of TATA-box-binding protein 2 (TBP2) from Triticum aestivum (Wheat).